A 460-amino-acid polypeptide reads, in one-letter code: GTPase Der (460 aa).

2 EngA-type G domains span residues 2 to 164 and 196 to 368; these read QSII…HEEF and IRVG…ENFT. GTP contacts are provided by residues 8–15, 55–59, 116–119, 202–209, 249–253, and 313–316; these read GKPNVGKS, DSGGL, NKVD, GRVNVGKS, DTAGI, and NKWD. Residues 369 to 453 form the KH-like domain; sequence QKIQTSKLNT…PLVIASRKKG (85 aa).

Belongs to the TRAFAC class TrmE-Era-EngA-EngB-Septin-like GTPase superfamily. EngA (Der) GTPase family. As to quaternary structure, associates with the 50S ribosomal subunit.

In terms of biological role, GTPase that plays an essential role in the late steps of ribosome biogenesis. In Campylobacter jejuni subsp. jejuni serotype O:23/36 (strain 81-176), this protein is GTPase Der.